The chain runs to 126 residues: Holo-[acyl-carrier-protein] synthase (126 aa).

Asp9 and Glu58 together coordinate Mg(2+).

It belongs to the P-Pant transferase superfamily. AcpS family. The cofactor is Mg(2+).

The protein localises to the cytoplasm. It carries out the reaction apo-[ACP] + CoA = holo-[ACP] + adenosine 3',5'-bisphosphate + H(+). Functionally, transfers the 4'-phosphopantetheine moiety from coenzyme A to a Ser of acyl-carrier-protein. The chain is Holo-[acyl-carrier-protein] synthase from Vibrio atlanticus (strain LGP32) (Vibrio splendidus (strain Mel32)).